A 113-amino-acid polypeptide reads, in one-letter code: T cell receptor alpha variable 36/delta variable 7 (113 aa).

An N-terminal signal peptide occupies residues 1–21 (MMKCPQALLAIFWLLLSWVSS). Residues 23–113 (DKVVQSPLSL…DSAIYLCAVE (91 aa)) enclose the Ig-like domain. N-linked (GlcNAc...) asparagine glycosylation is found at N43 and N96. C44 and C110 are disulfide-bonded.

In terms of assembly, alpha-beta TR is a heterodimer composed of an alpha and beta chain; disulfide-linked. The alpha-beta TR is associated with the transmembrane signaling CD3 coreceptor proteins to form the TR-CD3 (TcR or TCR). The assembly of alpha-beta TR heterodimers with CD3 occurs in the endoplasmic reticulum where a single alpha-beta TR heterodimer associates with one CD3D-CD3E heterodimer, one CD3G-CD3E heterodimer and one CD247 homodimer forming a stable octameric structure. CD3D-CD3E and CD3G-CD3E heterodimers preferentially associate with TR alpha and TR beta chains, respectively. The association of the CD247 homodimer is the last step of TcR assembly in the endoplasmic reticulum and is required for transport to the cell surface.

The protein localises to the cell membrane. V region of the variable domain of T cell receptor (TR) alpha chain that participates in the antigen recognition. Alpha-beta T cell receptors are antigen specific receptors which are essential to the immune response and are present on the cell surface of T lymphocytes. Recognize peptide-major histocompatibility (MH) (pMH) complexes that are displayed by antigen presenting cells (APC), a prerequisite for efficient T cell adaptive immunity against pathogens. Binding of alpha-beta TR to pMH complex initiates TR-CD3 clustering on the cell surface and intracellular activation of LCK that phosphorylates the ITAM motifs of CD3G, CD3D, CD3E and CD247 enabling the recruitment of ZAP70. In turn ZAP70 phosphorylates LAT, which recruits numerous signaling molecules to form the LAT signalosome. The LAT signalosome propagates signal branching to three major signaling pathways, the calcium, the mitogen-activated protein kinase (MAPK) kinase and the nuclear factor NF-kappa-B (NF-kB) pathways, leading to the mobilization of transcription factors that are critical for gene expression and essential for T cell growth and differentiation. The T cell repertoire is generated in the thymus, by V-(D)-J rearrangement. This repertoire is then shaped by intrathymic selection events to generate a peripheral T cell pool of self-MH restricted, non-autoaggressive T cells. Post-thymic interaction of alpha-beta TR with the pMH complexes shapes TR structural and functional avidity. The polypeptide is T cell receptor alpha variable 36/delta variable 7 (Homo sapiens (Human)).